The sequence spans 42 residues: MKGLPKFLSLGPVLLVLWLSVQATLLIVINIIYPDLLFYPLS.

The helical transmembrane segment at 7–27 (FLSLGPVLLVLWLSVQATLLI) threads the bilayer.

It belongs to the PsaJ family.

The protein localises to the cellular thylakoid membrane. Its function is as follows. May help in the organization of the PsaE and PsaF subunits. This is Photosystem I reaction center subunit IX from Gloeothece citriformis (strain PCC 7424) (Cyanothece sp. (strain PCC 7424)).